The chain runs to 333 residues: MVRMTAVCTAKTVSPVPSTRKEFKGAIAELRKKLNAVILAHYYQDPEIQDIADFIGDSLELSRRAASTNADVIVFCGVHFMAETAKILSPEKIVLLPDLEAGCSLADDCPADEFAAFRDKHPDHIVVSYINCTAAVKAQSDLICTSSNAVALVSQLPKDRPILFAPDQNLGRWVQKQSGRELTIWPGRCMVHETFSEEALLKLKMMHPEAKVIAHPECLERLLELADYVGSTSKLLEYTETNPGTKFIVLTEPGILHQMKQRMPNKEFMDVPGIDGCSCNECPYMRLNTLEKLWRCLSTMKPSIEIEEGVRQKALIPIQRMLNMKEKQEASQH.

Residues His-41 and Ser-58 each contribute to the iminosuccinate site. Cys-103 contacts [4Fe-4S] cluster. Iminosuccinate-binding positions include Tyr-129–Asn-131 and Ser-146. Cys-189 provides a ligand contact to [4Fe-4S] cluster. Residues His-215–Glu-217 and Thr-232 contribute to the iminosuccinate site. Cys-282 is a binding site for [4Fe-4S] cluster.

Belongs to the quinolinate synthase family. Type 2 subfamily. Requires [4Fe-4S] cluster as cofactor.

The protein localises to the cytoplasm. The enzyme catalyses iminosuccinate + dihydroxyacetone phosphate = quinolinate + phosphate + 2 H2O + H(+). It participates in cofactor biosynthesis; NAD(+) biosynthesis; quinolinate from iminoaspartate: step 1/1. Functionally, catalyzes the condensation of iminoaspartate with dihydroxyacetone phosphate to form quinolinate. The sequence is that of Quinolinate synthase from Prochlorococcus marinus (strain MIT 9303).